The primary structure comprises 431 residues: Ubiquitin-like modifier-activating enzyme 5 (431 aa).

ATP-binding residues include glycine 92, aspartate 113, lysine 136, asparagine 159, and asparagine 197. The Zn(2+) site is built by cysteine 239 and cysteine 242. Cysteine 263 (glycyl thioester intermediate) is an active-site residue. Zn(2+)-binding residues include cysteine 316 and cysteine 321. The disordered stretch occupies residues 339–396 (AKAKMEADASTTIDEGPLHDDNEWNISVVDDENEKDTTKAASSSDTLPEGLTRELPVA).

The protein belongs to the ubiquitin-activating E1 family. UBA5 subfamily.

E1-like enzyme which activates UFM1. The polypeptide is Ubiquitin-like modifier-activating enzyme 5 (Arabidopsis thaliana (Mouse-ear cress)).